A 78-amino-acid polypeptide reads, in one-letter code: MALSRGTFYFGLALFFIVVELPSGSWAGLEYSQSFPGGEFAVCETCRLGRGKCRRTCLDSEKIAGKCKLNFFCCRERI.

The signal sequence occupies residues 1–27; sequence MALSRGTFYFGLALFFIVVELPSGSWA. 3 disulfides stabilise this stretch: Cys46–Cys73, Cys53–Cys67, and Cys57–Cys74.

This sequence belongs to the beta-defensin family.

It localises to the secreted. Functionally, has antibacterial activity. This Rattus norvegicus (Rat) protein is Beta-defensin 12 (Defb12).